Reading from the N-terminus, the 891-residue chain is Translation initiation factor IF-2 (891 aa).

Residues 50–303 (KKEHGSADES…TSMQHGFDKS (254 aa)) form a disordered region. 2 stretches are compositionally biased toward basic and acidic residues: residues 102-237 (TLEE…KTAD) and 245-261 (HAREAEDAADRKDEQQP). The region spanning 390–559 (GRAPVVTIMG…LLQSEVLELT (170 aa)) is the tr-type G domain. The G1 stretch occupies residues 399 to 406 (GHVDHGKT). 399–406 (GHVDHGKT) is a binding site for GTP. The interval 424-428 (GITQH) is G2. Residues 445–448 (DTPG) form a G3 region. Residues 445-449 (DTPGH) and 499-502 (NKID) contribute to the GTP site. The tract at residues 499-502 (NKID) is G4. Positions 535–537 (SAK) are G5.

The protein belongs to the TRAFAC class translation factor GTPase superfamily. Classic translation factor GTPase family. IF-2 subfamily.

It is found in the cytoplasm. One of the essential components for the initiation of protein synthesis. Protects formylmethionyl-tRNA from spontaneous hydrolysis and promotes its binding to the 30S ribosomal subunits. Also involved in the hydrolysis of GTP during the formation of the 70S ribosomal complex. The polypeptide is Translation initiation factor IF-2 (Aliivibrio salmonicida (strain LFI1238) (Vibrio salmonicida (strain LFI1238))).